The sequence spans 325 residues: Helicase VP6-A (325 aa).

Disordered regions lie at residues Met1–Arg126 and Gly175–Ile231. Composition is skewed to basic and acidic residues over residues Val8–Gln18, Glu32–Glu54, Gly61–Ile79, and Pro92–Gly105. ATP is bound at residue Lys106. Residues Lys106–Gly122 are compositionally biased toward gly residues. Residues Gly175–Ala229 are compositionally biased toward basic and acidic residues.

It belongs to the orbivirus VP6 family. As to quaternary structure, homohexamer.

The protein localises to the virion. The catalysed reaction is ATP + H2O = ADP + phosphate + H(+). In terms of biological role, ATP dependent RNA helicase essential for RNA packaging and viral transcription. Possesses ss- and dsRNA-binding capacity. In Bluetongue virus 11 (isolate USA) (BTV 11), this protein is Helicase VP6-A (Segment-9).